Reading from the N-terminus, the 103-residue chain is MTEQNELQRLRAELDALDGTLLDTVRRRIDLGVRIARYKSRHGVPMMQPGRVSLVKDRAARYAADHGLDESFLVNLYDVIITEMCRVEDLVMSRESLTAEDRR.

A Chorismate mutase domain is found at 1–92 (MTEQNELQRL…EMCRVEDLVM (92 aa)).

It catalyses the reaction 4-amino-4-deoxychorismate = 4-amino-4-deoxyprephenate. It participates in antibiotic biosynthesis. Its function is as follows. Involved in chloramphenicol biosynthesis. Probably catalyzes the conversion of 4-amino-4-deoxychorismate to 4-amino-4-deoxyprephenate. This is 4-amino-4-deoxychorismate mutase from Streptomyces venezuelae (strain ATCC 10712 / CBS 650.69 / DSM 40230 / JCM 4526 / NBRC 13096 / PD 04745).